The chain runs to 98 residues: NADH-ubiquinone oxidoreductase chain 4L (98 aa).

3 helical membrane-spanning segments follow: residues 2 to 22 (SPAV…TLMF), 26 to 46 (LMST…LATI), and 59 to 79 (IPIA…ALLA).

The protein belongs to the complex I subunit 4L family. As to quaternary structure, core subunit of respiratory chain NADH dehydrogenase (Complex I) which is composed of 45 different subunits.

The protein localises to the mitochondrion inner membrane. The enzyme catalyses a ubiquinone + NADH + 5 H(+)(in) = a ubiquinol + NAD(+) + 4 H(+)(out). In terms of biological role, core subunit of the mitochondrial membrane respiratory chain NADH dehydrogenase (Complex I) which catalyzes electron transfer from NADH through the respiratory chain, using ubiquinone as an electron acceptor. Part of the enzyme membrane arm which is embedded in the lipid bilayer and involved in proton translocation. This is NADH-ubiquinone oxidoreductase chain 4L (MT-ND4L) from Alexandromys kikuchii (Taiwan vole).